A 322-amino-acid chain; its full sequence is Phospho-N-acetylmuramoyl-pentapeptide-transferase (322 aa).

10 helical membrane-spanning segments follow: residues 10–30 (YTAL…IPML), 51–71 (NGTP…TGLT), 79–99 (MAVG…DDFI), 107–127 (LGLK…YVAF), 146–166 (FVIN…VAIV), 178–198 (LASG…SSIA), 203–223 (VAVL…FNSY), 227–247 (VFMG…FSVL), 250–270 (SVLI…SVLI), and 302–322 (VVFI…IAVF).

Belongs to the glycosyltransferase 4 family. MraY subfamily. The cofactor is Mg(2+).

Its subcellular location is the cell membrane. It carries out the reaction UDP-N-acetyl-alpha-D-muramoyl-L-alanyl-gamma-D-glutamyl-meso-2,6-diaminopimeloyl-D-alanyl-D-alanine + di-trans,octa-cis-undecaprenyl phosphate = di-trans,octa-cis-undecaprenyl diphospho-N-acetyl-alpha-D-muramoyl-L-alanyl-D-glutamyl-meso-2,6-diaminopimeloyl-D-alanyl-D-alanine + UMP. The protein operates within cell wall biogenesis; peptidoglycan biosynthesis. Its function is as follows. Catalyzes the initial step of the lipid cycle reactions in the biosynthesis of the cell wall peptidoglycan: transfers peptidoglycan precursor phospho-MurNAc-pentapeptide from UDP-MurNAc-pentapeptide onto the lipid carrier undecaprenyl phosphate, yielding undecaprenyl-pyrophosphoryl-MurNAc-pentapeptide, known as lipid I. The sequence is that of Phospho-N-acetylmuramoyl-pentapeptide-transferase from Clostridioides difficile (strain 630) (Peptoclostridium difficile).